The primary structure comprises 43 residues: Seed non-specific lipid transfer protein-like (43 aa).

Belongs to the plant LTP family. Homodimer.

Plant non-specific lipid-transfer proteins transfer phospholipids as well as galactolipids across membranes. May play a role in wax or cutin deposition in the cell walls of expanding epidermal cells and certain secretory tissues. This isoform inhibits the hyphal growth of several fungi in vitro. This chain is Seed non-specific lipid transfer protein-like, found in Raphanus sativus (Radish).